We begin with the raw amino-acid sequence, 129 residues long: CD59B glycoprotein (129 aa).

Positions 1-23 (MRAQRGLILLLLLLAVFCSTAVS) are cleaved as a signal peptide. The UPAR/Ly6 domain occupies 24–107 (LKCYNCLDPV…GLEEPNNAET (84 aa)). 5 disulfides stabilise this stretch: cysteine 26–cysteine 49, cysteine 29–cysteine 36, cysteine 42–cysteine 62, cysteine 68–cysteine 86, and cysteine 87–cysteine 92. Asparagine 39 is a glycosylation site (N-linked (GlcNAc...) asparagine). Residue asparagine 104 is the site of GPI-anchor amidated asparagine attachment. Positions 105–129 (AETSSLRKTALLGTSVLVAILKFCF) are cleaved as a propeptide — removed in mature form.

As to quaternary structure, interacts with T-cell surface antigen CD2. In terms of processing, N- and O-glycosylated. As to expression, widely expressed in the kidneys, brain, lungs, spleen and testis Testis-specific.

It localises to the cell membrane. The protein resides in the secreted. Functionally, potent inhibitor of the complement membrane attack complex (MAC) action, which protects self-cells from damage during complement activation. Acts by binding to the beta-haipins of C8 (C8A and C8B) components of the assembling MAC, forming an intermolecular beta-sheet that prevents incorporation of the multiple copies of C9 required for complete formation of the osmolytic pore. The sequence is that of CD59B glycoprotein from Mus musculus (Mouse).